We begin with the raw amino-acid sequence, 359 residues long: Protein mab-21-like 2 (359 aa).

The protein belongs to the mab-21 family.

It is found in the nucleus. It localises to the cytoplasm. In terms of biological role, required for eye morphogenesis. May promote the survival of proliferating retinal progenitor cells. The sequence is that of Protein mab-21-like 2 (mab21l2) from Danio rerio (Zebrafish).